Consider the following 132-residue polypeptide: Ribosome-binding factor A (132 aa).

Belongs to the RbfA family. In terms of assembly, monomer. Binds 30S ribosomal subunits, but not 50S ribosomal subunits or 70S ribosomes.

The protein localises to the cytoplasm. One of several proteins that assist in the late maturation steps of the functional core of the 30S ribosomal subunit. Associates with free 30S ribosomal subunits (but not with 30S subunits that are part of 70S ribosomes or polysomes). Required for efficient processing of 16S rRNA. May interact with the 5'-terminal helix region of 16S rRNA. This Burkholderia cenocepacia (strain ATCC BAA-245 / DSM 16553 / LMG 16656 / NCTC 13227 / J2315 / CF5610) (Burkholderia cepacia (strain J2315)) protein is Ribosome-binding factor A.